The following is a 173-amino-acid chain: DKQLDADVSPKPTIFLPSIAETKLQKAGTYLCLLEKFFPDVIKIHWQEKKSNTILGSQEGNTMKTNDTYMKFSWLTVPEKSLDKEHRCIVRHENNKNGVDQEIIFPPIKTDVITMDPKDNCSKDANDTLLLQLTNTSAYYMYLLLLLKSVVYFAIITCCLLRRTAFCCNGEKS.

The Ig-like domain maps to 10–104; the sequence is PKPTIFLPSI…NKNGVDQEII (95 aa). Cys-32 and Cys-88 are disulfide-bonded. N-linked (GlcNAc...) asparagine glycans are attached at residues Asn-66, Asn-120, Asn-126, and Asn-135. The chain crosses the membrane as a helical span at residues 139–161; it reads YYMYLLLLLKSVVYFAIITCCLL.

In terms of assembly, gamma-delta TR is a heterodimer composed of a gamma and delta chain; disulfide-linked. The gamma-delta TR is associated with the transmembrane signaling CD3 coreceptor proteins following the stoichiometry: a single gamma-delta TR heterodimer associates with one CD3D-CD3E heterodimer, one CD3G-CD3E heterodimer and one CD247 homodimer forming a stable octameric structure. Upon activation, gamma-delta TR complex associates with FCER1G to initiate intracellular signaling.

It is found in the cell membrane. Its function is as follows. Constant region of T cell receptor (TR) gamma chain that participates in the antigen recognition. Gamma-delta TRs recognize a variety of self and foreign non-peptide antigens frequently expressed at the epithelial boundaries between the host and external environment, including endogenous lipids presented by MH-like protein CD1D and phosphoantigens presented by butyrophilin-like molecule BTN3A1. Upon antigen recognition induces rapid, innate-like immune responses involved in pathogen clearance and tissue repair. Binding of gamma-delta TR complex to antigen triggers phosphorylation of immunoreceptor tyrosine-based activation motifs (ITAMs) in the CD3 chains by the LCK and FYN kinases, allowing the recruitment, phosphorylation, and activation of ZAP70 that facilitates phosphorylation of the scaffolding proteins LCP2 and LAT. This lead to the formation of a supramolecular signalosome that recruits the phospholipase PLCG1, resulting in calcium mobilization and ERK activation, ultimately leading to T cell expansion and differentiation into effector cells. Gamma-delta TRs are produced through somatic rearrangement of a limited repertoire of variable (V), diversity (D), and joining (J) genes. The potential diversity of gamma-delta TRs is conferred by the unique ability to rearrange (D) genes in tandem and to utilize all three reading frames. The combinatorial diversity is considerably increased by the sequence exonuclease trimming and random nucleotide (N) region additions which occur during the V-(D)-J rearrangements. The sequence is that of T cell receptor gamma constant 1 from Homo sapiens (Human).